A 215-amino-acid chain; its full sequence is Large ribosomal subunit protein uL4 (215 aa).

A disordered region spans residues 46–72; sequence TAKSKNRAEVSGGGRKPWAQKGGGRAR. Residues 56–71 show a composition bias toward gly residues; the sequence is SGGGRKPWAQKGGGRA.

It belongs to the universal ribosomal protein uL4 family. As to quaternary structure, part of the 50S ribosomal subunit.

One of the primary rRNA binding proteins, this protein initially binds near the 5'-end of the 23S rRNA. It is important during the early stages of 50S assembly. It makes multiple contacts with different domains of the 23S rRNA in the assembled 50S subunit and ribosome. Functionally, forms part of the polypeptide exit tunnel. This is Large ribosomal subunit protein uL4 from Helicobacter pylori (strain ATCC 700392 / 26695) (Campylobacter pylori).